A 125-amino-acid polypeptide reads, in one-letter code: Holo-[acyl-carrier-protein] synthase (125 aa).

The Mg(2+) site is built by aspartate 8 and glutamate 57.

This sequence belongs to the P-Pant transferase superfamily. AcpS family. Mg(2+) serves as cofactor.

The protein localises to the cytoplasm. It catalyses the reaction apo-[ACP] + CoA = holo-[ACP] + adenosine 3',5'-bisphosphate + H(+). Functionally, transfers the 4'-phosphopantetheine moiety from coenzyme A to a Ser of acyl-carrier-protein. The sequence is that of Holo-[acyl-carrier-protein] synthase from Nitrosomonas europaea (strain ATCC 19718 / CIP 103999 / KCTC 2705 / NBRC 14298).